We begin with the raw amino-acid sequence, 343 residues long: Aspartate carbamoyltransferase catalytic subunit (343 aa).

Residues arginine 91 and threonine 92 each coordinate carbamoyl phosphate. An L-aspartate-binding site is contributed by lysine 119. 3 residues coordinate carbamoyl phosphate: arginine 141, histidine 171, and glutamine 174. Residues arginine 204 and arginine 259 each contribute to the L-aspartate site. The carbamoyl phosphate site is built by glycine 300 and proline 301.

It belongs to the aspartate/ornithine carbamoyltransferase superfamily. ATCase family. As to quaternary structure, heterododecamer (2C3:3R2) of six catalytic PyrB chains organized as two trimers (C3), and six regulatory PyrI chains organized as three dimers (R2).

It catalyses the reaction carbamoyl phosphate + L-aspartate = N-carbamoyl-L-aspartate + phosphate + H(+). It functions in the pathway pyrimidine metabolism; UMP biosynthesis via de novo pathway; (S)-dihydroorotate from bicarbonate: step 2/3. Its function is as follows. Catalyzes the condensation of carbamoyl phosphate and aspartate to form carbamoyl aspartate and inorganic phosphate, the committed step in the de novo pyrimidine nucleotide biosynthesis pathway. This Burkholderia mallei (strain NCTC 10247) protein is Aspartate carbamoyltransferase catalytic subunit.